Consider the following 152-residue polypeptide: UPF0225 protein YchJ (152 aa).

This sequence belongs to the UPF0225 family.

In Salmonella gallinarum (strain 287/91 / NCTC 13346), this protein is UPF0225 protein YchJ.